The primary structure comprises 621 residues: TOX high mobility group box family member 4 (621 aa).

2 disordered regions span residues Leu-153–Val-227 and Leu-305–Glu-333. Thr-176 is subject to Phosphothreonine. A phosphoserine mark is found at Ser-178, Ser-181, and Ser-182. The segment covering Leu-183–Arg-193 has biased composition (basic and acidic residues). A compositionally biased stretch (basic residues) spans Lys-208–Lys-218. Positions Lys-213–Lys-218 match the Nuclear localization signal motif. The segment at residues Pro-223–Lys-291 is a DNA-binding region (HMG box). Positions Pro-307–Met-319 are enriched in pro residues. At Thr-313 the chain carries Phosphothreonine. Position 315 is a phosphoserine (Ser-315). A compositionally biased stretch (low complexity) spans Ala-320–Glu-333. Arg-481 carries the post-translational modification Asymmetric dimethylarginine. The segment covering Pro-510–Glu-525 has biased composition (polar residues). A disordered region spans residues Pro-510 to Val-529. Ser-533, Ser-550, Ser-552, Ser-560, Ser-562, and Ser-567 each carry phosphoserine.

In terms of assembly, component of the PNUTS-PP1 phosphatase complex, composed of PPP1R10/PNUTS, TOX4, WDR82 and PPP1CA or PPP1CB or PPP1CC. Interacts with PPP1R10/PNUTS. Interacts with FOXO1 and CREB1 (increased by cAMP); FOXO1 and CREB1 are required for full induction of TOX4-dependent activity and the interactions are inhibited by insulin. Expressed in liver (at protein level).

It localises to the nucleus. Its subcellular location is the chromosome. Its activity is regulated as follows. In liver, recruited to target gene promoters following treatment with dexamethasone and cAMP. Binding is decreased in presence of insulin. Its function is as follows. Transcription factor that modulates cell fate reprogramming from the somatic state to the pluripotent and neuronal fate. In liver, controls the expression of hormone-regulated gluconeogenic genes such as G6PC1 and PCK1. This regulation is independent of the insulin receptor activation. Also acts as a regulatory component of protein phosphatase 1 (PP1) complexes. Component of the PNUTS-PP1 protein phosphatase complex, a PP1 complex that regulates RNA polymerase II transcription pause-release. PNUTS-PP1 also plays a role in the control of chromatin structure and cell cycle progression during the transition from mitosis into interphase. The protein is TOX high mobility group box family member 4 of Homo sapiens (Human).